Here is a 219-residue protein sequence, read N- to C-terminus: Interleukin-12 subunit alpha (219 aa).

An N-terminal signal peptide occupies residues 1 to 22 (MCPARSLLLVATLVLLDYLSLA). N-linked (GlcNAc...) asparagine glycans are attached at residues Asn-24, Asn-93, and Asn-107. 3 cysteine pairs are disulfide-bonded: Cys-37/Cys-110, Cys-64/Cys-196, and Cys-85/Cys-123.

This sequence belongs to the IL-6 superfamily. As to quaternary structure, heterodimer with IL12B; disulfide-linked. This heterodimer is known as interleukin IL-12. Heterodimer with EBI3/IL27B; not disulfide-linked. This heterodimer is known as interleukin IL-35. Interacts with NBR1; this interaction promotes IL-12 secretion.

Its subcellular location is the secreted. Functionally, heterodimerizes with IL12B to form the IL-12 cytokine or with EBI3/IL27B to form the IL-35 cytokine. IL-12 is primarily produced by professional antigen-presenting cells (APCs) such as B-cells and dendritic cells (DCs) as well as macrophages and granulocytes and regulates T-cell and natural killer-cell responses, induces the production of interferon-gamma (IFN-gamma), favors the differentiation of T-helper 1 (Th1) cells and is an important link between innate resistance and adaptive immunity. Mechanistically, exerts its biological effects through a receptor composed of IL12R1 and IL12R2 subunits. Binding to the receptor results in the rapid tyrosine phosphorylation of a number of cellular substrates including the JAK family kinases TYK2 and JAK2. In turn, recruited STAT4 gets phosphorylated and translocates to the nucleus where it regulates cytokine/growth factor responsive genes. As part of IL-35, plays essential roles in maintaining the immune homeostasis of the liver microenvironment and also functions as an immune-suppressive cytokine. Mediates biological events through unconventional receptors composed of IL12RB2 and gp130/IL6ST heterodimers or homodimers. Signaling requires the transcription factors STAT1 and STAT4, which form a unique heterodimer that binds to distinct DNA sites. The protein is Interleukin-12 subunit alpha (IL12A) of Macaca mulatta (Rhesus macaque).